The sequence spans 359 residues: Guanine nucleotide-binding protein subunit alpha-11 (359 aa).

2 S-palmitoyl cysteine lipidation sites follow: cysteine 9 and cysteine 10. The G-alpha domain maps to arginine 38–valine 359. The segment at lysine 41–threonine 54 is G1 motif. Residues glycine 46–serine 53 and leucine 180–arginine 183 each bind GTP. Serine 53 is a binding site for Mg(2+). Residues aspartate 178–threonine 186 form a G2 motif region. Threonine 186 is a binding site for Mg(2+). The G3 motif stretch occupies residues phenylalanine 201–arginine 210. The residue at position 209 (glutamine 209) is a Deamidated glutamine; by Photorhabdus PAU_02230. Residues isoleucine 270–aspartate 277 are G4 motif. Residues asparagine 274–aspartate 277 and alanine 331 contribute to the GTP site. Positions threonine 329–threonine 334 are G5 motif.

This sequence belongs to the G-alpha family. G(q) subfamily. As to quaternary structure, g proteins are composed of 3 units; alpha, beta and gamma. The alpha chain contains the guanine nucleotide binding site. Interacts with RGS22. Interacts with NTSR1. In terms of assembly, (Microbial infection) Interacts with human cytomegalovirus (HHV-5) US28. Post-translationally, (Microbial infection) Deamidated at Gln-209 by Photorhabdus asymbiotica toxin PAU_02230, blocking GTP hydrolysis of heterotrimeric GNAQ or GNA11 and G-alphai (GNAI1, GNAI2 or GNAI3) proteins, thereby activating RhoA. As to expression, expressed in testis.

It is found in the cell membrane. It localises to the cytoplasm. It catalyses the reaction GTP + H2O = GDP + phosphate + H(+). Functionally, guanine nucleotide-binding proteins (G proteins) function as transducers downstream of G protein-coupled receptors (GPCRs) in numerous signaling cascades. The alpha chain contains the guanine nucleotide binding site and alternates between an active, GTP-bound state and an inactive, GDP-bound state. Signaling by an activated GPCR promotes GDP release and GTP binding. The alpha subunit has a low GTPase activity that converts bound GTP to GDP, thereby terminating the signal. Both GDP release and GTP hydrolysis are modulated by numerous regulatory proteins. Signaling is mediated via phospholipase C-beta-dependent inositol lipid hydrolysis for signal propagation: activates phospholipase C-beta: following GPCR activation, GNA11 activates PLC-beta (PLCB1, PLCB2, PLCB3 or PLCB4), leading to production of diacylglycerol (DAG) and inositol 1,4,5-trisphosphate (IP3). Transduces FFAR4 signaling in response to long-chain fatty acids (LCFAs). Together with GNAQ, required for heart development. In the respiratory epithelium, transmits OXGR1-dependent signals that lead to downstream intracellular Ca(2+) release and mucocilliary clearance of airborne pathogens. In Homo sapiens (Human), this protein is Guanine nucleotide-binding protein subunit alpha-11 (GNA11).